A 491-amino-acid chain; its full sequence is Nickel-binding protein NikA (491 aa).

A signal peptide spans 1–18 (MKFKRLATIFSAVLVLSG). C19 carries N-palmitoyl cysteine lipidation. C19 carries S-diacylglycerol cysteine lipidation.

The protein belongs to the bacterial solute-binding protein 5 family. In terms of assembly, the complex is composed of two ATP-binding proteins (NikD and NikE), two transmembrane proteins (NikB and NikC) and a solute-binding protein (NikA).

The protein resides in the cell membrane. Functionally, part of the ABC transporter complex NikABCDE (Opp2) involved in nickel import. Binds nickel and transfers it to the membrane-bound permease. Required for full urease activity and plays a significant role in the virulence of S.aureus during urinary tract infection (UTI). May bind nickel via a nickel-chelator. This Staphylococcus aureus (strain NCTC 8325 / PS 47) protein is Nickel-binding protein NikA.